The chain runs to 352 residues: MSKQPSLSYKDAGVDIDAGEALVERIKGVAKRTARPEVMGGLGGFGALCEIPAGYKQPVLVSGTDGVGTKLRLALNLNKHDSIGQDLVAMCVNDLVVCGAEPLFFLDYYATGKLNVDVAATVVTGIGAGCELAGCSLVGGETAEMPGMYEGEDYDLAGFCVGVVEKAEIIDGSKVATGDALIALPSSGPHSNGYSLIRKILEVSATDIENTQLDGKPLTDLLMAPTRIYVKPLLQLIKNTGAVKAMAHITGGGLLDNIPRVLPKNAQAVVDVASWQRPAVFDFLQEKGNVDEHEMHRVLNCGVGMVICVAQDQVEAALNELRAAGEQPWVIGHIAEAAEGAAQVELQNLKAH.

It belongs to the AIR synthase family.

It localises to the cytoplasm. The catalysed reaction is 2-formamido-N(1)-(5-O-phospho-beta-D-ribosyl)acetamidine + ATP = 5-amino-1-(5-phospho-beta-D-ribosyl)imidazole + ADP + phosphate + H(+). It functions in the pathway purine metabolism; IMP biosynthesis via de novo pathway; 5-amino-1-(5-phospho-D-ribosyl)imidazole from N(2)-formyl-N(1)-(5-phospho-D-ribosyl)glycinamide: step 2/2. In Pseudomonas putida (strain GB-1), this protein is Phosphoribosylformylglycinamidine cyclo-ligase.